Reading from the N-terminus, the 885-residue chain is Alanine--tRNA ligase (885 aa).

Zn(2+) is bound by residues H574, H578, C676, and H680.

The protein belongs to the class-II aminoacyl-tRNA synthetase family. Requires Zn(2+) as cofactor.

It localises to the cytoplasm. The catalysed reaction is tRNA(Ala) + L-alanine + ATP = L-alanyl-tRNA(Ala) + AMP + diphosphate. Catalyzes the attachment of alanine to tRNA(Ala) in a two-step reaction: alanine is first activated by ATP to form Ala-AMP and then transferred to the acceptor end of tRNA(Ala). Also edits incorrectly charged Ser-tRNA(Ala) and Gly-tRNA(Ala) via its editing domain. The polypeptide is Alanine--tRNA ligase (Syntrophobacter fumaroxidans (strain DSM 10017 / MPOB)).